A 174-amino-acid chain; its full sequence is MARPLRALIFGRFQPFHLGHLKVTKWALEKFDELVLLVGMANESHTVLNPFTAGERIWMMREALKDEGVDLSRIITATVPTMSVYVGHAFYIINLVPKVDSIITRNPVIAQVFHDAGLEVIAPPEFDRNLYRGSYIRKLMLEDGNWRELVPKKVAAIIDEIGGVERLKKAASRD.

Belongs to the archaeal NMN adenylyltransferase family.

This is an uncharacterized protein from Archaeoglobus fulgidus (strain ATCC 49558 / DSM 4304 / JCM 9628 / NBRC 100126 / VC-16).